Here is a 533-residue protein sequence, read N- to C-terminus: Retinoic acid receptor RXR-beta (533 aa).

Residues 1-24 (MSWAARPPFLPQRHAAGQCGPVGV) are disordered. The segment at 1–204 (MSWAARPPFL…PGGPGAGKRL (204 aa)) is modulating. Residue Arg25 is modified to Omega-N-methylarginine. Residues 37–183 (RRRRPWLDPA…GPPEDVKPPV (147 aa)) form a disordered region. Positions 46-61 (AAAAAAAAAAGEQQTP) are enriched in low complexity. The span at 67-82 (EAGRDGMGDSGRDSRS) shows a compositional bias: basic and acidic residues. The segment covering 83–94 (PDSSSPNPLSQG) has biased composition (low complexity). Composition is skewed to pro residues over residues 95–109 (APPP…PPSS) and 118–129 (APPPPPMPPPQL). Residues 130–143 (GSPFPVISSSMGSP) are compositionally biased toward low complexity. Pro residues predominate over residues 144–153 (GLPPPAPPGF). 2 consecutive NR C4-type zinc fingers follow at residues 205–225 (CAIC…CEGC) and 241–265 (CRDN…YQKC). The segment at residues 205-270 (CAICGDRSSG…RYQKCLATGM (66 aa)) is a DNA-binding region (nuclear receptor). The interval 271 to 295 (KREAVQEERQRGKDKDGDGEGAGGA) is hinge. Residues 276 to 288 (QEERQRGKDKDGD) are compositionally biased toward basic and acidic residues. 2 disordered regions span residues 276-299 (QEER…PEEM) and 313-336 (QKSD…NDPV). An NR LBD domain is found at 296-529 (PEEMPVDRIL…TFLMEMLEAP (234 aa)). Positions 320–329 (EGPGGTGGSG) are enriched in gly residues.

This sequence belongs to the nuclear hormone receptor family. NR2 subfamily. In terms of assembly, homodimer (in vitro). Heterodimer with other retinoic acid receptor family members. Binds DNA preferentially as a RAR/RXR heterodimer. Interacts with NR1H3. Interacts with AKAP13.

Its subcellular location is the nucleus. It is found in the cytoplasm. Receptor for retinoic acid. Retinoic acid receptors bind as heterodimers to their target response elements in response to their ligands, all-trans or 9-cis retinoic acid, and regulate gene expression in various biological processes. The RAR/RXR heterodimers bind to the retinoic acid response elements (RARE). The polypeptide is Retinoic acid receptor RXR-beta (RXRB) (Canis lupus familiaris (Dog)).